Reading from the N-terminus, the 238-residue chain is Probable xyloglucan-specific endo-beta-1,4-glucanase A (238 aa).

The signal sequence occupies residues 1 to 18 (MKLSLSVALSLAAATAQA). N106 and N171 each carry an N-linked (GlcNAc...) asparagine glycan.

Belongs to the glycosyl hydrolase 12 (cellulase H) family.

The protein localises to the secreted. The enzyme catalyses xyloglucan + H2O = xyloglucan oligosaccharides.. Its function is as follows. Catalyzes endohydrolysis of 1,4-beta-D-glucosidic linkages in xyloglucan with retention of the beta-configuration of the glycosyl residues. Specific for xyloglucan and does not hydrolyze other cell wall components. The polypeptide is Probable xyloglucan-specific endo-beta-1,4-glucanase A (xgeA) (Aspergillus fumigatus (strain CBS 144.89 / FGSC A1163 / CEA10) (Neosartorya fumigata)).